The chain runs to 517 residues: Cytochrome P450 monooxygenase sdnE (517 aa).

Residues serine 4–tyrosine 24 form a helical membrane-spanning segment. Asparagine 111 carries an N-linked (GlcNAc...) asparagine glycan. A helical transmembrane segment spans residues phenylalanine 219–proline 239. Cysteine 456 contributes to the heme binding site.

The protein belongs to the cytochrome P450 family. The cofactor is heme.

Its subcellular location is the membrane. It participates in antibiotic biosynthesis. Cytochrome P450 monooxygenase; part of the gene cluster that mediates the biosynthesis of sordarin and hypoxysordarin, glycoside antibiotics with a unique tetracyclic diterpene aglycone structure. First, the geranylgeranyl diphosphate synthase sdnC constructs GGDP from farnesyl diphosphate and isopentenyl diphosphate. The diterpene cyclase sdnA then catalyzes the cyclization of GGDP to afford cycloaraneosene. Cycloaraneosene is then hydroxylated four times by the putative cytochrome P450 monooxygenases sdnB, sdnE, sdnF and sdnH to give a hydroxylated cycloaraneosene derivative such as cycloaraneosene-8,9,13,19-tetraol. Although the order of the hydroxylations is unclear, at least C8, C9 and C13 of the cycloaraneosene skeleton are hydroxylated before the sordaricin formation. Dehydration of the 13-hydroxy group of the hydroxylated cycloaraneosene derivative might be catalyzed by an unassigned hypothetical protein such as sdnG and sdnP to construct the cyclopentadiene moiety. The FAD-dependent oxidoreductase sdnN is proposed to catalyze the oxidation at C9 of the hydroxylated cycloaraneosene derivative and also catalyze the Baeyer-Villiger oxidation to give the lactone intermediate. The presumed lactone intermediate would be hydrolyzed to give an acrolein moiety and a carboxylate moiety. Then, [4+2]cycloaddition would occur between the acrolein moiety and the cyclopentadiene moiety to give sordaricin. SdnN might also be involved in the [4+2]cycloaddition after the hypothesized oxidation to accommodate the oxidized product and prompt the [4+2]cycloaddition. GDP-6-deoxy-D-altrose may be biosynthesized from GDP-D-mannose by the putative GDP-mannose-4,6-dehydratase sdnI and the short-chain dehydrogenase sdnK. The glycosyltransferase sdnJ catalyzes the attachment of 6-deoxy-D-altrose onto the 19-hydroxy group of sordaricin to give 4'-O-demethylsordarin. The methyltransferase sdnD would complete the biosynthesis of sordarin. Sordarin can be further modified into hypoxysordarin. The unique acyl chain at the 3'-hydroxy group of hypoxysordarin would be constructed by an iterative type I PKS sdnO and the trans-acting polyketide methyltransferase sdnL. SdnL would be responsible for the introduction of an alpha-methyl group of the polyketide chain. Alternatively, the beta-lactamase-like protein sdnR might be responsible for the cleavage and transfer of the polyketide chain from the PKS sdnO to sordarin. Two putative cytochrome P450 monooxygenases, sdnQ and sdnT, might catalyze the epoxidations of the polyketide chain to complete the biosynthesis of hypoxysordarin. Transcriptional regulators sdnM and sdnS are presumably encoded for the transcriptional regulation of the expression of the sdn gene cluster. This Sordaria araneosa (Pleurage araneosa) protein is Cytochrome P450 monooxygenase sdnE.